Here is a 63-residue protein sequence, read N- to C-terminus: uncharacterized protein (63 aa).

This is an uncharacterized protein from Acidianus bottle-shaped virus (isolate Italy/Pozzuoli) (ABV).